A 1267-amino-acid chain; its full sequence is Probable cation-transporting ATPase catp-6 (1267 aa).

Residues 1 to 32 are Extracellular-facing; the sequence is MVEAGGARRHRMTLESGDHTLTLFAYRTGPFR. Residues 33 to 53 form a helical membrane-spanning segment; the sequence is TILFYALTVLTLGIFRLILHW. At 54–189 the chain is on the cytoplasmic side; the sequence is KQKWDVKMRM…RNEIVVQLRP (136 aa). Residues 190–210 form a helical membrane-spanning segment; that stretch reads ILYLLVMEVITPFYVFQIFSV. At 211–217 the chain is on the extracellular side; the sequence is TVWYNDE. Residues 218–238 form a helical membrane-spanning segment; that stretch reads YAYYASLIVILSLGSIVMDVY. Over 239–390 the chain is Cytoplasmic; it reads QIRTQEIRLR…DFRFTKDLFK (152 aa). A helical transmembrane segment spans residues 391–411; the sequence is FILFLACISGCGFIYTIIVMI. The Extracellular portion of the chain corresponds to 412 to 424; it reads MRGNTLRRIIVRS. The helical transmembrane segment at 425–445 threads the bilayer; sequence LDIITITVPPALPAAMSVGII. Residues 446-950 are Cytoplasmic-facing; the sequence is NAQLRLKKKE…VTSFGIFKYM (505 aa). Aspartate 476 serves as the catalytic 4-aspartylphosphate intermediate. The Mg(2+) site is built by aspartate 891 and aspartate 895. A helical membrane pass occupies residues 951-971; that stretch reads AGYSLTQFVTVMHLYWISNIL. Over 972-976 the chain is Extracellular; it reads TDGQF. A helical membrane pass occupies residues 977-997; the sequence is MYIDMFLITMFALLFGNTPAF. Over 998 to 1013 the chain is Cytoplasmic; that stretch reads YRLAHTPPPTRLLSIA. The chain crosses the membrane as a helical span at residues 1014–1034; it reads SMTSVVGQLIIIGVVQFIVFF. Residues 1035–1058 lie on the Extracellular side of the membrane; it reads STSQQPWFTPYQPPVDDEVEDKRS. The chain crosses the membrane as a helical span at residues 1059-1079; it reads MQGTALFCVSMFQYIILALVY. At 1080-1097 the chain is on the cytoplasmic side; sequence SKGPPFRGNLWSNKPMCA. Residues 1098 to 1118 traverse the membrane as a helical segment; that stretch reads LTIFATLLCLFIVIWPTELVL. Residues 1119 to 1132 are Extracellular-facing; it reads KTLGNVELPSLTFR. Residues 1133–1153 traverse the membrane as a helical segment; the sequence is IFIVIVGAVNAAVSYGFETLF. At 1154 to 1267 the chain is on the cytoplasmic side; sequence VDFFLLGYWE…EEPEKLERTY (114 aa). Residues 1232 to 1256 are disordered; that stretch reads ERLISRIGGEPTWLTNPIPPHSLSE.

Belongs to the cation transport ATPase (P-type) (TC 3.A.3) family. Type V subfamily.

Its subcellular location is the membrane. The enzyme catalyses ATP + H2O = ADP + phosphate + H(+). The protein is Probable cation-transporting ATPase catp-6 of Caenorhabditis elegans.